The sequence spans 353 residues: 41 kDa protein (353 aa).

Residues 132-197 (QSSHASALEQ…DNNSSDTIKD (66 aa)) form a disordered region. Basic and acidic residues predominate over residues 157-169 (LDNKGKSDSENCN).

In Lactobacillus helveticus (Lactobacillus suntoryeus), this protein is 41 kDa protein.